A 115-amino-acid polypeptide reads, in one-letter code: MTRVKRGYVARRRRKKILHLTSGFYGAHSRLFRVANQKAIRALAYSHIDRAKRKRNMRSLWICRINAVAREQNISYSYLIKSLKEKKILLNRKMLAQLAVLDKPSFIKLINTHLN.

Belongs to the bacterial ribosomal protein bL20 family.

The protein localises to the plastid. Its subcellular location is the chloroplast. Functionally, binds directly to 23S ribosomal RNA and is necessary for the in vitro assembly process of the 50S ribosomal subunit. It is not involved in the protein synthesizing functions of that subunit. The sequence is that of Large ribosomal subunit protein bL20c from Chaetosphaeridium globosum (Charophycean green alga).